The primary structure comprises 3814 residues: Hybrid PKS-NRPS synthetase pyvA (3814 aa).

Residues 1–340 (MDPQQRLLLE…GSNAHVILES (340 aa)) form the Ketosynthase family 3 (KS3) domain. Residues Cys87, His222, and His261 each act as for beta-ketoacyl synthase activity in the active site. The malonyl-CoA:ACP transacylase (MAT) domain stretch occupies residues 441–758 (VFTGQGAQWH…PYFASLSRGV (318 aa)). Ser533 functions as the For malonyltransferase activity in the catalytic mechanism. Residues 835-970 (HPILGAKMPG…GLISISTATT (136 aa)) form an N-terminal hotdog fold region. The interval 835-1149 (HPILGAKMPG…LRLTSLSNGR (315 aa)) is dehydratase (DH) domain. A PKS/mFAS DH domain is found at 835–1151 (HPILGAKMPG…LTSLSNGRAA (317 aa)). His867 acts as the Proton acceptor; for dehydratase activity in catalysis. Residues 970 to 993 (TADGAPSRKPYRQHPQPQPGRMST) are disordered. Residues 991–1151 (MSTASFPAQS…LTSLSNGRAA (161 aa)) form a C-terminal hotdog fold region. Residue Asp1057 is the Proton donor; for dehydratase activity of the active site. The tract at residues 1520-1836 (GLLETLVWED…MGRHTGKVVL (317 aa)) is enoyl reductase (ER) domain. Positions 1864 to 2036 (TYLLVGGLGG…PASSMNCGRI (173 aa)) are ketoreductase (KR) domain. The Carrier 1 domain maps to 2141-2220 (IDLSDRVALL…ALVEKAIGLF (80 aa)). O-(pantetheine 4'-phosphoryl)serine is present on Ser2180. The span at 2228–2238 (QQQQQSVQSSS) shows a compositional bias: low complexity. The interval 2228 to 2270 (QQQQQSVQSSSAPSNDDQSPTFNKNLDSQDPSTSLQIPKADCS) is disordered. Polar residues predominate over residues 2239 to 2263 (APSNDDQSPTFNKNLDSQDPSTSLQ). The tract at residues 2273 to 2718 (LPMSTFQNRL…PEVRLAGTLE (446 aa)) is condensation (C) domain 7. Positions 2738–3149 (PLNLPRRIVE…DGQLEFLGRI (412 aa)) are adenylation (A) domain 8. The segment at 3257–3304 (SGKTDRRALGASQAPGTPPQHGAGPAAASTLDPAQAQAQDRADEEVGD) is disordered. The Carrier 2 domain occupies 3304 to 3379 (DRTMATVTRV…QLVELVHSKV (76 aa)). Ser3339 is subject to O-(pantetheine 4'-phosphoryl)serine. Residues 3428–3680 (MTGAESFTGI…VDLVPVNYLT (253 aa)) form a thioesterase (TE) domain region.

In the C-terminal section; belongs to the NRP synthetase family.

The protein operates within secondary metabolite biosynthesis. Functionally, hybrid PKS-NRPS synthetase; part of the gene cluster that mediates the biosynthesis of pyranoviolin A, a pyranonigrin analog with a C-3 methoxy group. Initially, the PKS portion of pyvA synthesizes C-10 carbon chain from 5 molecules of malonyl-CoA, which is then condensed with the thiolation (T) domain-bound glycine activated by the adenylation (A) domain. The subsequent chain release by Dieckmann condensation (DKC) could be catalyzed by the TE domain present at the C-terminus of pyvA and/or the alpha/beta hydrolase pyvD, installing the tetramic acid moiety. The FAD-dependent monooxygenase pyvC next epoxidizes one of the olefins of the polyketide part, and the epoxide ring-opening induces the dihydro-gamma-pyrone ring formation. The cytochrome P450 monooxygeanse pyvB would be responsible for the 2 consecutive reactions, in which the dihydro-gamma-pyrone is oxidized to gamma-pyrone and C-7 is hydroxylated to yield pyranonigrin F. Finally, the O-methyltransferase pyvH methylates the C-3 hydroxy group to complete the biosynthesis. This chain is Hybrid PKS-NRPS synthetase pyvA, found in Aspergillus violaceofuscus (strain CBS 115571).